A 264-amino-acid chain; its full sequence is 3-methyl-2-oxobutanoate hydroxymethyltransferase (264 aa).

2 residues coordinate Mg(2+): D45 and D84. 3-methyl-2-oxobutanoate-binding positions include 45 to 46 (DS), D84, and K112. Residue E114 coordinates Mg(2+). Catalysis depends on E181, which acts as the Proton acceptor.

It belongs to the PanB family. In terms of assembly, homodecamer; pentamer of dimers. Requires Mg(2+) as cofactor.

It is found in the cytoplasm. It carries out the reaction 3-methyl-2-oxobutanoate + (6R)-5,10-methylene-5,6,7,8-tetrahydrofolate + H2O = 2-dehydropantoate + (6S)-5,6,7,8-tetrahydrofolate. The protein operates within cofactor biosynthesis; (R)-pantothenate biosynthesis; (R)-pantoate from 3-methyl-2-oxobutanoate: step 1/2. In terms of biological role, catalyzes the reversible reaction in which hydroxymethyl group from 5,10-methylenetetrahydrofolate is transferred onto alpha-ketoisovalerate to form ketopantoate. The chain is 3-methyl-2-oxobutanoate hydroxymethyltransferase from Shewanella amazonensis (strain ATCC BAA-1098 / SB2B).